The sequence spans 564 residues: Putative ABC transporter ATP-binding protein PBPRA2240 (564 aa).

ABC transporter domains lie at 3 to 244 (IEFS…GIRE) and 299 to 533 (LTVN…ANLT). ATP-binding positions include 37–44 (GPSGSGKS) and 332–339 (GKNGSGKS).

This sequence belongs to the ABC transporter superfamily.

The protein resides in the cell inner membrane. In terms of biological role, probably part of an ABC transporter complex. Responsible for energy coupling to the transport system. The chain is Putative ABC transporter ATP-binding protein PBPRA2240 from Photobacterium profundum (strain SS9).